We begin with the raw amino-acid sequence, 601 residues long: RNA polymerase II C-terminal domain phosphatase-like 5 (601 aa).

Residues 1–20 are disordered; the sequence is MFVAKNLSPERESKRQKKEP. The span at 8–20 shows a compositional bias: basic and acidic residues; that stretch reads SPERESKRQKKEP. FCP1 homology domains follow at residues 84–259 and 381–553; these read LNMK…TDES and LNEK…DESE.

In terms of tissue distribution, expressed in roots, seedlings, hypocotyls, cotyledons, leaves, siliques and flowers.

It localises to the nucleus. The catalysed reaction is O-phospho-L-seryl-[protein] + H2O = L-seryl-[protein] + phosphate. It carries out the reaction O-phospho-L-threonyl-[protein] + H2O = L-threonyl-[protein] + phosphate. Mediates the dephosphorylation of 'Ser-2' of the heptad repeats YSPTSPS in the C-terminal domain of the largest RNA polymerase II subunit (RPB1). This promotes the activity of RNA polymerase II. Positively regulates abscisic acid (ABA) and drought responses, including the regulation of specific genes expression. The protein is RNA polymerase II C-terminal domain phosphatase-like 5 of Arabidopsis thaliana (Mouse-ear cress).